A 278-amino-acid polypeptide reads, in one-letter code: 4-deoxy-L-threo-5-hexosulose-uronate ketol-isomerase (278 aa).

Residues His-196, His-198, Glu-203, and His-245 each coordinate Zn(2+).

This sequence belongs to the KduI family. The cofactor is Zn(2+).

It catalyses the reaction 5-dehydro-4-deoxy-D-glucuronate = 3-deoxy-D-glycero-2,5-hexodiulosonate. Its pathway is glycan metabolism; pectin degradation; 2-dehydro-3-deoxy-D-gluconate from pectin: step 4/5. In terms of biological role, catalyzes the isomerization of 5-dehydro-4-deoxy-D-glucuronate to 3-deoxy-D-glycero-2,5-hexodiulosonate. In Shigella sonnei (strain Ss046), this protein is 4-deoxy-L-threo-5-hexosulose-uronate ketol-isomerase.